Here is a 480-residue protein sequence, read N- to C-terminus: Trigger factor (480 aa).

In terms of domain architecture, PPIase FKBP-type spans 161–249 (GDRLLITGKF…VVEVLKEQLP (89 aa)). The segment at 426-480 (TEEPVEKEAEEKNEEFAIDHEVLPTKDHDAIPAAKYDDNTPKGAETEDKQEKDKD) is disordered. Over residues 429–480 (PVEKEAEEKNEEFAIDHEVLPTKDHDAIPAAKYDDNTPKGAETEDKQEKDKD) the composition is skewed to basic and acidic residues.

The protein belongs to the FKBP-type PPIase family. Tig subfamily.

It is found in the cytoplasm. It carries out the reaction [protein]-peptidylproline (omega=180) = [protein]-peptidylproline (omega=0). Functionally, involved in protein export. Acts as a chaperone by maintaining the newly synthesized protein in an open conformation. Functions as a peptidyl-prolyl cis-trans isomerase. This chain is Trigger factor, found in Rhodopirellula baltica (strain DSM 10527 / NCIMB 13988 / SH1).